The primary structure comprises 526 residues: Medium/long-chain-fatty-acid--[acyl-carrier-protein] ligase MbtM (526 aa).

N6-acetyllysine; by Pat is present on residues lysine 260 and lysine 511.

The protein belongs to the ATP-dependent AMP-binding enzyme family. Acetylated on Lys-511 and Lys-260 by Pat. Lys-511 is the major acetylation site. Acetylation results in the inactivation of the enzyme.

The catalysed reaction is a long-chain fatty acid + holo-[ACP] + ATP = a long-chain fatty acyl-[ACP] + AMP + diphosphate. It carries out the reaction a medium-chain fatty acid + holo-[ACP] + ATP = a medium-chain fatty acyl-[ACP] + AMP + diphosphate. The enzyme catalyses hexadecanoate + holo-[ACP] + ATP = hexadecanoyl-[ACP] + AMP + diphosphate. It catalyses the reaction hexadecanoate + ATP + H(+) = hexadecanoyl-AMP + diphosphate. The catalysed reaction is hexadecanoyl-AMP + holo-[ACP] = hexadecanoyl-[ACP] + AMP + H(+). It carries out the reaction dodecanoate + holo-[ACP] + ATP = dodecanoyl-[ACP] + AMP + diphosphate. The enzyme catalyses dodecanoate + ATP + H(+) = dodecanoyl-AMP + diphosphate. It catalyses the reaction dodecanoyl-AMP + holo-[ACP] = dodecanoyl-[ACP] + AMP + H(+). The protein operates within siderophore biosynthesis; mycobactin biosynthesis. Reversibly inactivated by post-translational acetylation by Pat in a cAMP-dependent manner and reactivated by Sir2 deacylase. Its function is as follows. Activates lipidic moieties required for mycobactin biosynthesis. Converts medium- to long-chain aliphatic fatty acids into acyl adenylate, which is further transferred on to the phosphopantetheine arm of the carrier protein MbtL. Shows a strong preference for palmitic acid (C16) and cannot use short-chain fatty acids. Proceeds via a Bi Uni Uni Bi ping-pong mechanism. During the first half-reaction (adenylation), fatty acid binds first to the free enzyme, followed by ATP and the release of pyrophosphate to form the adenylate intermediate. During the second half-reaction (ligation), holo-MbtL binds to the enzyme followed by the release of products AMP and acylated MbtL. This chain is Medium/long-chain-fatty-acid--[acyl-carrier-protein] ligase MbtM, found in Mycolicibacterium smegmatis (strain ATCC 700084 / mc(2)155) (Mycobacterium smegmatis).